The primary structure comprises 118 residues: Holo-[acyl-carrier-protein] synthase (118 aa).

Residues Asp-8 and Glu-58 each coordinate Mg(2+).

It belongs to the P-Pant transferase superfamily. AcpS family. Requires Mg(2+) as cofactor.

The protein localises to the cytoplasm. The enzyme catalyses apo-[ACP] + CoA = holo-[ACP] + adenosine 3',5'-bisphosphate + H(+). In terms of biological role, transfers the 4'-phosphopantetheine moiety from coenzyme A to a Ser of acyl-carrier-protein. The sequence is that of Holo-[acyl-carrier-protein] synthase from Listeria monocytogenes serotype 4b (strain CLIP80459).